The sequence spans 137 residues: Probable 4-amino-4-deoxy-L-arabinose-phosphoundecaprenol flippase subunit ArnF (137 aa).

Residues 1–5 (MSRAR) are Cytoplasmic-facing. The chain crosses the membrane as a helical span at residues 6-26 (GFAFALGSVALVSGAQLGMRW). At 27–49 (SMTRLPAPDQWLPALSAGSVDLA) the chain is on the periplasmic side. The chain crosses the membrane as a helical span at residues 50 to 70 (ALAVVAAAIAAYALSMLCWLL). Residues 71–80 (ALRDLPLGRA) are Cytoplasmic-facing. A helical membrane pass occupies residues 81 to 101 (YSLLSISYALVYLLAASLPLF). N102 is a topological domain (periplasmic). Residues 103 to 123 (EPFTLSKTLGVALVILGVITI) form a helical membrane-spanning segment. Topologically, residues 124–137 (NSRSAPATSPRNTP) are cytoplasmic.

The protein belongs to the ArnF family. In terms of assembly, heterodimer of ArnE and ArnF.

It is found in the cell inner membrane. The protein operates within bacterial outer membrane biogenesis; lipopolysaccharide biosynthesis. Functionally, translocates 4-amino-4-deoxy-L-arabinose-phosphoundecaprenol (alpha-L-Ara4N-phosphoundecaprenol) from the cytoplasmic to the periplasmic side of the inner membrane. In Pseudomonas fluorescens (strain ATCC BAA-477 / NRRL B-23932 / Pf-5), this protein is Probable 4-amino-4-deoxy-L-arabinose-phosphoundecaprenol flippase subunit ArnF.